The primary structure comprises 528 residues: Succinate-semialdehyde dehydrogenase, mitochondrial (528 aa).

The transit peptide at 1-34 (MVIGAAARVAIGGCRKLISSHTSLLLVSSQCRQM) directs the protein to the mitochondrion. 196-198 (TPW) contributes to the NAD(+) binding site. Arg207 contributes to the substrate binding site. NAD(+) is bound by residues 222–225 (KPSE), 275–280 (GSTAVG), and Glu297. Glu297 (proton acceptor) is an active-site residue. Residue Arg325 coordinates substrate. Cys331 acts as the Nucleophile in catalysis. A disulfide bridge connects residues Cys331 and Cys333. 428-430 (EIF) provides a ligand contact to NAD(+). Ser488 is a substrate binding site.

This sequence belongs to the aldehyde dehydrogenase family. In terms of assembly, homotetramer. As to expression, expressed in developing leaf tissues.

Its subcellular location is the mitochondrion matrix. It catalyses the reaction succinate semialdehyde + NAD(+) + H2O = succinate + NADH + 2 H(+). It participates in amino-acid degradation; 4-aminobutanoate degradation. Competitive inhibition by NADH. Inhibited by ATP, ADP and AMP. Redox-regulated. Inhibited under oxydizing conditions. Oxidizes specifically succinate semialdehyde. Involved in plant response to environmental stress by preventing the accumulation of reactive oxygen species, probably by regulating proline, gamma-hydroxybutyrate (GHB) and gamma-aminobutyrate (GABA) levels. Required for the maintenance of the shoot apical meristem (SAM) structure and subsequent adaxial-abaxial axis-dependent development of cotyledons and leaves. This chain is Succinate-semialdehyde dehydrogenase, mitochondrial, found in Arabidopsis thaliana (Mouse-ear cress).